Consider the following 309-residue polypeptide: Peptide methionine sulfoxide reductase MsrA/MsrB (309 aa).

The tract at residues 1–153 is peptide methionine sulfoxide reductase A; it reads MIYLAGGCFW…PNGYCHIDIN (153 aa). The active site involves C8. The region spanning 170 to 293 is the MsrB domain; it reads ATEIKEKLSA…NSLSITFIPK (124 aa). Residue C282 is the Nucleophile of the active site.

This sequence in the N-terminal section; belongs to the MsrA Met sulfoxide reductase family. It in the C-terminal section; belongs to the MsrB Met sulfoxide reductase family.

It carries out the reaction L-methionyl-[protein] + [thioredoxin]-disulfide + H2O = L-methionyl-(S)-S-oxide-[protein] + [thioredoxin]-dithiol. The enzyme catalyses [thioredoxin]-disulfide + L-methionine + H2O = L-methionine (S)-S-oxide + [thioredoxin]-dithiol. The catalysed reaction is L-methionyl-[protein] + [thioredoxin]-disulfide + H2O = L-methionyl-(R)-S-oxide-[protein] + [thioredoxin]-dithiol. Its function is as follows. Has an important function as a repair enzyme for proteins that have been inactivated by oxidation. Catalyzes the reversible oxidation-reduction of methionine sulfoxide in proteins to methionine. This Streptococcus pyogenes serotype M18 (strain MGAS8232) protein is Peptide methionine sulfoxide reductase MsrA/MsrB (msrAB).